A 362-amino-acid polypeptide reads, in one-letter code: Leucoanthocyanidin dioxygenase (362 aa).

Residues 211–313 (MEELLLQKKI…RISWAVFCEP (103 aa)) form the Fe2OG dioxygenase domain. Residues His-238, Asp-240, and His-294 each coordinate Fe cation.

The protein belongs to the iron/ascorbate-dependent oxidoreductase family. It depends on Fe cation as a cofactor. The cofactor is L-ascorbate.

It carries out the reaction a (2R,3S,4S)-leucoanthocyanidin + 2-oxoglutarate + O2 = a 4-H-anthocyanidin with a 3-hydroxy group + succinate + CO2 + 2 H2O. Its pathway is pigment biosynthesis; anthocyanin biosynthesis. Functionally, oxidation of leucoanthocyanidins into anthocyanidins. The polypeptide is Leucoanthocyanidin dioxygenase (Vitis vinifera (Grape)).